A 96-amino-acid polypeptide reads, in one-letter code: Large ribosomal subunit protein uL23 (96 aa).

It belongs to the universal ribosomal protein uL23 family. In terms of assembly, part of the 50S ribosomal subunit. Contacts protein L29, and trigger factor when it is bound to the ribosome.

Functionally, one of the early assembly proteins it binds 23S rRNA. One of the proteins that surrounds the polypeptide exit tunnel on the outside of the ribosome. Forms the main docking site for trigger factor binding to the ribosome. This chain is Large ribosomal subunit protein uL23, found in Bacillus cytotoxicus (strain DSM 22905 / CIP 110041 / 391-98 / NVH 391-98).